A 368-amino-acid polypeptide reads, in one-letter code: MNKDNHHIKVSLTNNPYEIVIGKSSLESIGDELFNIGFREGLKVLVVSNKEVSDHYGDCIIKSLIKSKFKPKLLIIKAGEDQKNQSSIDLIHNAAYEARLERGSLMIALGGGVIGDMTGFAAATWLRGVNVVQIPTTLLAMVDASIGGKTGINHSKGKNLIGAFHQPRLVLIDPKTLITLPSREFKAGMAEIIKYGVISDLELFELLERQENISDLSNIKEKLLIEIIKRSAKSKAEIVIKDEKESGVRAFLNYGHTFGHVIENLCGYGKWLHGEAVAMGMVAVGQLAVQRGLWKEDNAKRQKRLIEKAGLPSNWPQLEIESVLSSLQGDKKVKNGKVSFVMPLKIGDVKLFNNISNKEIRECLQKIS.

NAD(+) is bound by residues 112–116, 136–137, lysine 149, lysine 158, and 176–179; these read GVIGD, TT, and TLIT. Residues glutamate 191, histidine 256, and histidine 273 each coordinate Zn(2+).

Belongs to the sugar phosphate cyclases superfamily. Dehydroquinate synthase family. Co(2+) is required as a cofactor. The cofactor is Zn(2+). Requires NAD(+) as cofactor.

It is found in the cytoplasm. The catalysed reaction is 7-phospho-2-dehydro-3-deoxy-D-arabino-heptonate = 3-dehydroquinate + phosphate. It functions in the pathway metabolic intermediate biosynthesis; chorismate biosynthesis; chorismate from D-erythrose 4-phosphate and phosphoenolpyruvate: step 2/7. In terms of biological role, catalyzes the conversion of 3-deoxy-D-arabino-heptulosonate 7-phosphate (DAHP) to dehydroquinate (DHQ). The chain is 3-dehydroquinate synthase from Prochlorococcus marinus (strain NATL2A).